The following is a 306-amino-acid chain: NAD-dependent protein deacylase (306 aa).

Residues 1–305 (MNKQLKEFQE…PIALKPLIGD (305 aa)) form the Deacetylase sirtuin-type domain. 23-42 (GAGLSASSGLPTFRGSQGLW) serves as a coordination point for NAD(+). Substrate is bound by residues Tyr-67 and Arg-70. 103 to 106 (QNVD) contacts NAD(+). The active-site Proton acceptor is His-123. Positions 131, 136, 200, and 203 each coordinate Zn(2+). Residues 243–245 (GTS), 269–271 (NTD), and Ala-291 each bind NAD(+).

Belongs to the sirtuin family. Class III subfamily. Zn(2+) is required as a cofactor.

It is found in the mitochondrion. It catalyses the reaction N(6)-malonyl-L-lysyl-[protein] + NAD(+) + H2O = 2''-O-malonyl-ADP-D-ribose + nicotinamide + L-lysyl-[protein]. The catalysed reaction is N(6)-succinyl-L-lysyl-[protein] + NAD(+) + H2O = 2''-O-succinyl-ADP-D-ribose + nicotinamide + L-lysyl-[protein]. The enzyme catalyses N(6)-glutaryl-L-lysyl-[protein] + NAD(+) + H2O = 2''-O-glutaryl-ADP-D-ribose + nicotinamide + L-lysyl-[protein]. NAD-dependent lysine demalonylase, desuccinylase and deglutarylase that specifically removes malonyl, succinyl and glutaryl groups on target proteins. Has weak NAD-dependent protein deacetylase activity; however this activity may not be physiologically relevant in vivo. The polypeptide is NAD-dependent protein deacylase (Candida albicans (strain SC5314 / ATCC MYA-2876) (Yeast)).